The sequence spans 119 residues: uncharacterized protein (119 aa).

Residues 78–119 (SHRKSQQHQTQGNQVLRGTRKLESPTVGPRPGLRRQHTRNFL) form a disordered region. Polar residues predominate over residues 84-93 (QHQTQGNQVL). A compositionally biased stretch (basic residues) spans 109–119 (GLRRQHTRNFL).

This is an uncharacterized protein from Saccharomyces cerevisiae (strain ATCC 204508 / S288c) (Baker's yeast).